Consider the following 504-residue polypeptide: Putative ribose/galactose/methyl galactoside import ATP-binding protein (504 aa).

ABC transporter domains are found at residues 5 to 242 and 252 to 497; these read ISVK…GRNL and TSAN…TRRE. Residue 37-44 participates in ATP binding; that stretch reads GENGAGKS.

Belongs to the ABC transporter superfamily. Carbohydrate importer 2 (CUT2) (TC 3.A.1.2) family.

Its subcellular location is the cell inner membrane. The catalysed reaction is D-ribose(out) + ATP + H2O = D-ribose(in) + ADP + phosphate + H(+). It catalyses the reaction D-galactose(out) + ATP + H2O = D-galactose(in) + ADP + phosphate + H(+). Functionally, part of an ABC transporter complex involved in carbohydrate import. Could be involved in ribose, galactose and/or methyl galactoside import. Responsible for energy coupling to the transport system. This Albidiferax ferrireducens (strain ATCC BAA-621 / DSM 15236 / T118) (Rhodoferax ferrireducens) protein is Putative ribose/galactose/methyl galactoside import ATP-binding protein.